The primary structure comprises 953 residues: Lysosomal alpha-glucosidase (953 aa).

Residues 1 to 27 (MNIRKPLCSNSVVGACTLVSLTTAVIL) form the signal peptide. Residues 28 to 69 (GHLMLRELMLLPQDLHESSSGLWKTYRPHHQESYEPAPLHIQ) constitute a propeptide that is removed on maturation. Positions 80 to 131 (TQCDVTPNSRFDCAPDKGITQEQCEARGCCWVPAGQVLNGPVMGQPWCFFPP) constitute a P-type domain. Intrachain disulfides connect Cys82–Cys109, Cys92–Cys108, and Cys103–Cys127. N-linked (GlcNAc...) asparagine glycans are attached at residues Asn140, Asn233, and Asn390. A substrate-binding site is contributed by Asp404. Asn470 is a glycosylation site (N-linked (GlcNAc...) asparagine). The Nucleophile role is filled by Asp518. Glu521 is a catalytic residue. Cys533 and Cys558 are joined by a disulfide. Residues Arg600 and Asp616 each contribute to the substrate site. Cysteines 647 and 658 form a disulfide. Residue Asn652 is glycosylated (N-linked (GlcNAc...) asparagine). His674 serves as a coordination point for substrate. N-linked (GlcNAc...) asparagine glycans are attached at residues Asn883 and Asn926.

This sequence belongs to the glycosyl hydrolase 31 family.

The protein localises to the lysosome. The protein resides in the lysosome membrane. It carries out the reaction Hydrolysis of terminal, non-reducing (1-&gt;4)-linked alpha-D-glucose residues with release of alpha-D-glucose.. In terms of biological role, essential for the degradation of glycogen in lysosomes. Has highest activity on alpha-1,4-linked glycosidic linkages, but can also hydrolyze alpha-1,6-linked glucans. This is Lysosomal alpha-glucosidase (Gaa) from Rattus norvegicus (Rat).